The sequence spans 320 residues: Transcription termination/antitermination protein NusG (320 aa).

The protein belongs to the NusG family.

In terms of biological role, participates in transcription elongation, termination and antitermination. This is Transcription termination/antitermination protein NusG from Mycoplasma pneumoniae (strain ATCC 29342 / M129 / Subtype 1) (Mycoplasmoides pneumoniae).